A 399-amino-acid polypeptide reads, in one-letter code: Acetate kinase (399 aa).

Residue N10 participates in Mg(2+) binding. Residue K17 participates in ATP binding. R91 lines the substrate pocket. The Proton donor/acceptor role is filled by D148. ATP is bound by residues 208–212 (HLGNG), 283–285 (DCR), and 331–335 (GIGEN). E385 contacts Mg(2+).

The protein belongs to the acetokinase family. Homodimer. The cofactor is Mg(2+). It depends on Mn(2+) as a cofactor.

It is found in the cytoplasm. It catalyses the reaction acetate + ATP = acetyl phosphate + ADP. Its pathway is metabolic intermediate biosynthesis; acetyl-CoA biosynthesis; acetyl-CoA from acetate: step 1/2. Functionally, catalyzes the formation of acetyl phosphate from acetate and ATP. Can also catalyze the reverse reaction. The chain is Acetate kinase from Shewanella baltica (strain OS223).